The chain runs to 299 residues: Cuticle collagen 34 (299 aa).

The tract at residues 105–282 is disordered; the sequence is PGPAGTPGKP…GSPGERGICP (178 aa). Residues 129–162 show a composition bias toward pro residues; it reads PGRPPQQPCEPITPPPCKPCPQGPPGPPGPPGPP. Over residues 164–181 the composition is skewed to low complexity; that stretch reads DSGEPGSPGLPGQDAAPG. Pro residues-rich tracts occupy residues 182–195 and 215–233; these read EPGPKGPPGPPGAP and PGEPGPPGEAGPQGPPGSP. The segment at 216–278 is triple-helical region; sequence GEPGPPGEAG…AGPPGSPGER (63 aa). A compositionally biased stretch (low complexity) spans 251-263; the sequence is NGPDGQPGADGNP. Residues 265-274 are compositionally biased toward pro residues; that stretch reads APGPAGPPGS.

This sequence belongs to the cuticular collagen family. In terms of assembly, collagen polypeptide chains are complexed within the cuticle by disulfide bonds and other types of covalent cross-links.

Nematode cuticles are composed largely of collagen-like proteins. The cuticle functions both as an exoskeleton and as a barrier to protect the worm from its environment. The chain is Cuticle collagen 34 (col-34) from Caenorhabditis elegans.